The following is a 561-amino-acid chain: Putative transport protein Ent638_1362 (561 aa).

A run of 5 helical transmembrane segments spans residues 8 to 28, 32 to 52, 66 to 86, 94 to 114, and 158 to 178; these read LLNGNYILLLFVVLALGLCLG, LGSVQLGNSIGVLVVSLLLGQ, FMLFIFCVGVEAGPNFFSIFF, MLALVMVGSALIIALGLGKLF, and HLSLGYALTYLIGLVSLIVAA. 2 consecutive RCK C-terminal domains span residues 202–288 and 292–373; these read LDTD…SFRN and VFDR…RIGF. The next 5 membrane-spanning stretches (helical) occupy residues 383-403, 406-426, 447-467, 475-495, and 540-560; these read LLAFCAFFIVGLMIGMITFQF, FSFGVGNAAGLLFAGIMLGFL, FGLMVFMAGVGLSAGSGIGHS, MLVAGLIVSLLPVVICFLFGA, and AIANVLLTLAGTLIIIIWPGL.

It belongs to the AAE transporter (TC 2.A.81) family. YbjL subfamily.

It is found in the cell membrane. The chain is Putative transport protein Ent638_1362 from Enterobacter sp. (strain 638).